The chain runs to 235 residues: MNFVAFERAKQGTGASRRLRNSGKTPGIVYGGSAEPQMIELDHNALWHALKKEAFHSSVLDMEVAGKTDKVLLRDVQYHPFKQCVLHIDFQRVDDKTRLHMKVPLHYSGSEESNAVKVDKCMVNLIVNELDVTCMPSDLPEFIAVDLSKLEKGTSLHLKDIKLPRGVTPVIRGGQHNPALVSVVPPVVVLEAPVADAAPAPVAEAKGKGKAAKPAATAKPAAAAAKPAAKPKAKK.

Residues Pro201–Lys235 form a disordered region. The segment covering Ala212–Ala228 has biased composition (low complexity).

It belongs to the bacterial ribosomal protein bL25 family. CTC subfamily. In terms of assembly, part of the 50S ribosomal subunit; part of the 5S rRNA/L5/L18/L25 subcomplex. Contacts the 5S rRNA. Binds to the 5S rRNA independently of L5 and L18.

In terms of biological role, this is one of the proteins that binds to the 5S RNA in the ribosome where it forms part of the central protuberance. This is Large ribosomal subunit protein bL25 from Verminephrobacter eiseniae (strain EF01-2).